Here is a 196-residue protein sequence, read N- to C-terminus: Imidazoleglycerol-phosphate dehydratase (196 aa).

The protein belongs to the imidazoleglycerol-phosphate dehydratase family.

It is found in the cytoplasm. The catalysed reaction is D-erythro-1-(imidazol-4-yl)glycerol 3-phosphate = 3-(imidazol-4-yl)-2-oxopropyl phosphate + H2O. The protein operates within amino-acid biosynthesis; L-histidine biosynthesis; L-histidine from 5-phospho-alpha-D-ribose 1-diphosphate: step 6/9. The chain is Imidazoleglycerol-phosphate dehydratase from Akkermansia muciniphila (strain ATCC BAA-835 / DSM 22959 / JCM 33894 / BCRC 81048 / CCUG 64013 / CIP 107961 / Muc).